We begin with the raw amino-acid sequence, 539 residues long: Glutamyl-tRNA(Gln) amidotransferase subunit A, mitochondrial (539 aa).

Residues Lys-94 and Ser-181 each act as charge relay system in the active site. Residue Ser-205 is the Acyl-ester intermediate of the active site.

It belongs to the amidase family. GatA subfamily. As to quaternary structure, subunit of the heterotrimeric GatCAB amidotransferase (AdT) complex, composed of A, B and C subunits.

The protein localises to the mitochondrion. It carries out the reaction L-glutamyl-tRNA(Gln) + L-glutamine + ATP + H2O = L-glutaminyl-tRNA(Gln) + L-glutamate + ADP + phosphate + H(+). In terms of biological role, allows the formation of correctly charged Gln-tRNA(Gln) through the transamidation of misacylated Glu-tRNA(Gln) in the mitochondria. The reaction takes place in the presence of glutamine and ATP through an activated gamma-phospho-Glu-tRNA(Gln). The chain is Glutamyl-tRNA(Gln) amidotransferase subunit A, mitochondrial from Mycosarcoma maydis (Corn smut fungus).